The following is a 393-amino-acid chain: Putative N(4)-(beta-N-acetylglucosaminyl)-L-asparaginase CG1827 (393 aa).

The N-terminal stretch at 1–23 is a signal peptide; sequence MRRHLRASLWILCLATMAFSILA. N-linked (GlcNAc...) asparagine glycosylation is found at Asn49 and Asn64. Intrachain disulfides connect Cys97–Cys102 and Cys196–Cys212. The Nucleophile role is filled by Thr243. Substrate-binding positions include 271–274 and 294–297; these read RVGD and TGDG. Cys354 and Cys381 are oxidised to a cystine.

It belongs to the Ntn-hydrolase family. As to quaternary structure, heterotetramer of two alpha and two beta chains arranged as a dimer of alpha/beta heterodimers. Post-translationally, cleaved into an alpha and beta chain by autocatalysis; this activates the enzyme. The N-terminal residue of the beta subunit is responsible for the nucleophile hydrolase activity.

The catalysed reaction is N(4)-(beta-N-acetyl-D-glucosaminyl)-L-asparagine + H2O = N-acetyl-beta-D-glucosaminylamine + L-aspartate + H(+). Its function is as follows. Cleaves the GlcNAc-Asn bond which joins oligosaccharides to the peptide of asparagine-linked glycoproteins. The polypeptide is Putative N(4)-(beta-N-acetylglucosaminyl)-L-asparaginase CG1827 (Drosophila melanogaster (Fruit fly)).